The chain runs to 75 residues: MSLFYRAVALGTLSALVWYSTSILAEINENSCSSSSVDHEDCEEPDEIVREEQDYRALLAFSLVICGTLLVTCVI.

The first 25 residues, 1 to 25 (MSLFYRAVALGTLSALVWYSTSILA), serve as a signal peptide directing secretion. A helical transmembrane segment spans residues 55–75 (YRALLAFSLVICGTLLVTCVI).

It is found in the host endoplasmic reticulum membrane. In terms of biological role, plays a role in the down-regulation of the host NKG2D ligand MICA by targeting ER-resident MICA to proteasomal degradation prior to the GPI-anchoring step. In turn, MICA reduction diminishes NK-cell killing of HCMV-infected cells. This is an uncharacterized protein from Homo sapiens (Human).